The primary structure comprises 208 residues: Troponin I, cardiac muscle (208 aa).

Disordered stretches follow at residues 1 to 37 (MAEEEEPKPPPLRRKSSANYRGYAVEPHAKRQSKISA), 54 to 74 (DLEREEQERAGEKQRHLGELC), and 168 to 208 (VRKD…GGQS). An N-acetylalanine modification is found at A2. Residues 28 to 73 (HAKRQSKISASRKLQLKTLLLQRAKRDLEREEQERAGEKQRHLGEL) form an involved in binding TNC region. 2 stretches are compositionally biased toward basic and acidic residues: residues 54–71 (DLEREEQERAGEKQRHLG) and 168–187 (VRKDEAEKESREVGDWRKNV).

This sequence belongs to the troponin I family. As to quaternary structure, binds to actin and tropomyosin.

In terms of biological role, troponin I is the inhibitory subunit of troponin, the thin filament regulatory complex which confers calcium-sensitivity to striated muscle actomyosin ATPase activity. This chain is Troponin I, cardiac muscle (TNNI3), found in Coturnix japonica (Japanese quail).